Reading from the N-terminus, the 171-residue chain is MLRTPTVSALVRNVAVRAAKPTMAVRAASTMPISNPTLANIEKRWEQMPMQEQAELWMALRDRMKGNWADLTLQEKKAAYYIAFGPHGPRALPPPGEQKKVLAYTVAGVFLSFVIFATMRAFAKPPPATMTKEWQEATNEFLKAQKSDPLTGLTSEGYNGKGHVQSPSASA.

The N-terminal 27 residues, M1–A27, are a transit peptide targeting the mitochondrion. The Mitochondrial matrix portion of the chain corresponds to A28–K100. A helical membrane pass occupies residues V101 to A123. Residues K124–A171 lie on the Mitochondrial intermembrane side of the membrane. Positions Q145 to A171 are disordered.

It belongs to the cytochrome c oxidase IV family. As to quaternary structure, component of the cytochrome c oxidase (complex IV, CIV), a multisubunit enzyme composed of 11 subunits. The complex is composed of a catalytic core of 3 subunits Cox1, Cox2 and Cox3, encoded in the mitochondrial DNA, and 8 supernumerary subunits Cox4, Cox5a/Cox5, Cox6, Cox7, Cox8, Cox7a/Cox9, Cox6b/Cox12 and Cox6a/Cox13, which are encoded in the nuclear genome. The complex exists as a monomer or a dimer and forms respiratory supercomplexes (SCs) in the inner mitochondrial membrane with NADH-ubiquinone oxidoreductase (complex I, CI) and ubiquinol-cytochrome c oxidoreductase (cytochrome b-c1 complex, complex III, CIII), resulting in various different assemblies (supercomplexes I(1)IV(1), I(1)III(3)IV(2), III(2)IV(1) and III(2)IV(2) as well as larger supercomplexes of compositions like I(1)III(2)IV(5-6)).

It is found in the mitochondrion inner membrane. It participates in energy metabolism; oxidative phosphorylation. Its function is as follows. Component of the cytochrome c oxidase, the last enzyme in the mitochondrial electron transport chain which drives oxidative phosphorylation. The respiratory chain contains 3 multisubunit complexes succinate dehydrogenase (complex II, CII), ubiquinol-cytochrome c oxidoreductase (cytochrome b-c1 complex, complex III, CIII) and cytochrome c oxidase (complex IV, CIV), that cooperate to transfer electrons derived from NADH and succinate to molecular oxygen, creating an electrochemical gradient over the inner membrane that drives transmembrane transport and the ATP synthase. Cytochrome c oxidase is the component of the respiratory chain that catalyzes the reduction of oxygen to water. Electrons originating from reduced cytochrome c in the intermembrane space (IMS) are transferred via the dinuclear copper A center (CU(A)) of Cox2 and heme A of Cox1 to the active site in Cox1, a binuclear center (BNC) formed by heme A3 and copper B (CU(B)). The BNC reduces molecular oxygen to 2 water molecules using 4 electrons from cytochrome c in the IMS and 4 protons from the mitochondrial matrix. In Neurospora crassa (strain ATCC 24698 / 74-OR23-1A / CBS 708.71 / DSM 1257 / FGSC 987), this protein is Cytochrome c oxidase subunit 5, mitochondrial (cya-4).